A 75-amino-acid polypeptide reads, in one-letter code: Translational regulator CsrA (75 aa).

Belongs to the CsrA/RsmA family. Homodimer; the beta-strands of each monomer intercalate to form a hydrophobic core, while the alpha-helices form wings that extend away from the core.

The protein localises to the cytoplasm. A translational regulator that binds mRNA to regulate translation initiation and/or mRNA stability. Usually binds in the 5'-UTR at or near the Shine-Dalgarno sequence preventing ribosome-binding, thus repressing translation. Its main target seems to be the major flagellin gene, while its function is anatagonized by FliW. This Thermosipho melanesiensis (strain DSM 12029 / CIP 104789 / BI429) protein is Translational regulator CsrA.